The primary structure comprises 827 residues: Leucine--tRNA ligase (827 aa).

The short motif at 42–52 is the 'HIGH' region element; the sequence is PYPSGNLHMGH. A 'KMSKS' region motif is present at residues 583-587; the sequence is KMSKS. Lys586 contacts ATP.

The protein belongs to the class-I aminoacyl-tRNA synthetase family.

The protein localises to the cytoplasm. It carries out the reaction tRNA(Leu) + L-leucine + ATP = L-leucyl-tRNA(Leu) + AMP + diphosphate. This is Leucine--tRNA ligase from Desulfitobacterium hafniense (strain DSM 10664 / DCB-2).